The primary structure comprises 196 residues: dITP/XTP pyrophosphatase (196 aa).

9–14 (TSNAGK) contributes to the substrate binding site. Mg(2+) is bound by residues glutamate 39 and aspartate 68. Aspartate 68 acts as the Proton acceptor in catalysis. Substrate is bound by residues serine 69, 147-150 (FGYD), lysine 170, and 175-176 (HR).

Belongs to the HAM1 NTPase family. Homodimer. The cofactor is Mg(2+).

It catalyses the reaction XTP + H2O = XMP + diphosphate + H(+). The enzyme catalyses dITP + H2O = dIMP + diphosphate + H(+). The catalysed reaction is ITP + H2O = IMP + diphosphate + H(+). Pyrophosphatase that catalyzes the hydrolysis of nucleoside triphosphates to their monophosphate derivatives, with a high preference for the non-canonical purine nucleotides XTP (xanthosine triphosphate), dITP (deoxyinosine triphosphate) and ITP. Seems to function as a house-cleaning enzyme that removes non-canonical purine nucleotides from the nucleotide pool, thus preventing their incorporation into DNA/RNA and avoiding chromosomal lesions. The polypeptide is dITP/XTP pyrophosphatase (Nostoc sp. (strain PCC 7120 / SAG 25.82 / UTEX 2576)).